A 253-amino-acid chain; its full sequence is Probable transcriptional regulatory protein RAF_ORF0717 (253 aa).

The disordered stretch occupies residues Met1 to Arg21.

This sequence belongs to the TACO1 family.

The protein resides in the cytoplasm. The chain is Probable transcriptional regulatory protein RAF_ORF0717 from Rickettsia africae (strain ESF-5).